The chain runs to 628 residues: Hemocyanin II (628 aa).

Residue Thr-1 is modified to Blocked amino end (Thr); partial. Positions 173, 177, 204, 324, 328, and 364 each coordinate Cu cation. A glycan (N-linked (GlcNAc...) asparagine) is linked at Asn-449. Cystine bridges form between Cys-534–Cys-576 and Cys-536–Cys-583.

Belongs to the tyrosinase family. Hemocyanin subfamily. Hexamer or a multiple thereof. As to expression, hemolymph.

It localises to the secreted. The protein resides in the extracellular space. Hemocyanins are copper-containing oxygen carriers occurring freely dissolved in the hemolymph of many mollusks and arthropods. The polypeptide is Hemocyanin II (Limulus polyphemus (Atlantic horseshoe crab)).